The primary structure comprises 245 residues: 14-3-3 protein theta (245 aa).

It belongs to the 14-3-3 family. In terms of assembly, homodimer, and heterodimer with other family members.

The protein localises to the cytoplasm. In terms of biological role, adapter protein implicated in the regulation of a large spectrum of both general and specialized signaling pathways. Binds to a large number of partners, usually by recognition of a phosphoserine or phosphothreonine motif. Binding generally results in the modulation of the activity of the binding partner. The sequence is that of 14-3-3 protein theta (YWHAQ) from Gallus gallus (Chicken).